A 167-amino-acid polypeptide reads, in one-letter code: Low molecular mass early light-inducible protein HV60, chloroplastic (167 aa).

The N-terminal 33 residues, 1 to 33 (MATMMAMSSFAGAAVLPRGSARSLPALGRRTLV), are a transit peptide targeting the chloroplast. 2 helical membrane-spanning segments follow: residues 101 to 121 (GQAWFAYTVAMLSMASLVPLL) and 145 to 165 (FAMIGLVALAATEIITGTPFI).

The protein belongs to the ELIP/psbS family.

It localises to the plastid. The protein resides in the chloroplast membrane. Probably involved in the integration of pigments into the mature pigment-protein complexes. The polypeptide is Low molecular mass early light-inducible protein HV60, chloroplastic (Hordeum vulgare (Barley)).